A 142-amino-acid chain; its full sequence is uncharacterized protein (142 aa).

The signal sequence occupies residues 1–20 (MPSVNEFFIFFLIVWHTCEC). N-linked (GlcNAc...) asparagine glycosylation occurs at N80.

This is an uncharacterized protein from Dictyostelium discoideum (Social amoeba).